Here is a 193-residue protein sequence, read N- to C-terminus: MAAIRKKLVIVGDGACGKTCLLIVFSKDQFPEVYVPTVFENYIADIEVDGKQVELALWDTAGQEDYDRLRPLSYPDTDVILMCFSIDSPDSLENIPEKWTPEVKHFCPNVPIILVGNKKDLRNDEHTRRELAKMKQEPVKPEEGRDMANRINAFGYLECSAKTKEGVREVFEMATRAGLQVRKNKKRRGCPLL.

12–19 (GDGACGKT) is a GTP binding site. Positions 34 to 42 (YVPTVFENY) match the Effector region motif. Asparagine 41 is subject to ADP-ribosylasparagine; by botulinum toxin. GTP is bound by residues 59–63 (DTAGQ) and 117–120 (NKKD). A Cysteine methyl ester modification is found at cysteine 190. Cysteine 190 carries S-geranylgeranyl cysteine lipidation. Positions 191–193 (PLL) are cleaved as a propeptide — removed in mature form.

This sequence belongs to the small GTPase superfamily. Rho family.

The protein resides in the cell membrane. Its subcellular location is the cleavage furrow. Regulates a signal transduction pathway linking plasma membrane receptors to the assembly of focal adhesions and actin stress fibers. Serves as a microtubule-dependent signal that is required for the myosin contractile ring formation during cell cycle cytokinesis. Regulates apical junction formation in bronchial epithelial cells. The chain is Rho-related GTP-binding protein RhoC (RHOC) from Gallus gallus (Chicken).